A 441-amino-acid chain; its full sequence is Protein disulfide isomerase-like 2-3 (441 aa).

Positions 1 to 18 are cleaved as a signal peptide; sequence MRPAVAAALLLVAAAVAA. Thioredoxin domains lie at 19–139 and 159–276; these read SPVS…ALLR and SEKT…ANAA. Catalysis depends on nucleophile residues Cys-59 and Cys-62. Cys-59 and Cys-62 are oxidised to a cystine. The tract at residues 143–166 is disordered; it reads NGKTSAGSGGKKSGGSSEKTEPSA. Catalysis depends on nucleophile residues Cys-195 and Cys-198. Cys-195 and Cys-198 are joined by a disulfide.

Belongs to the protein disulfide isomerase family.

The protein resides in the endoplasmic reticulum lumen. The enzyme catalyses Catalyzes the rearrangement of -S-S- bonds in proteins.. Its function is as follows. Acts as a protein-folding catalyst that interacts with nascent polypeptides to catalyze the formation, isomerization, and reduction or oxidation of disulfide bonds. May play a role in storage protein biogenesis. The polypeptide is Protein disulfide isomerase-like 2-3 (PDIL2-3) (Oryza sativa subsp. japonica (Rice)).